The chain runs to 691 residues: F-box/LRR-repeat protein 5 (691 aa).

A hemerythrin-like region spans residues 1-159 (MAPFPEEVDV…IKKKVIAQHC (159 aa)). Residues histidine 15, histidine 57, glutamate 58, glutamate 61, histidine 80, histidine 126, and glutamate 130 each coordinate Fe(3+). The F-box domain maps to 202–248 (STGITHLPPEVMVSIFSYLNPQELCRCSQVSTKWSQLAKTGSLWKHL). 7 LRR repeats span residues 340–364 (SSAV…LDLT), 365–392 (QTDI…DLSG), 393–418 (CEKI…ESGL), 479–508 (VWML…CVME), 576–607 (TRLL…SLSG), 608–635 (CYQI…NLSG), and 636–661 (CLTV…YFYY). Cysteine 662, cysteine 676, cysteine 686, and cysteine 687 together coordinate [2Fe-2S] cluster.

Part of a SCF (SKP1-cullin-F-box) protein ligase complex. Interacts with ACO1/IRP1, IREB2/IRP2; the interaction depends on the [2Fe-2S] cluster. Interacts with DCTN1/p150-glued. It depends on [2Fe-2S] cluster as a cofactor. Polybiquitinated upon iron and oxygen depletion, leading to its degradation by the proteasome. Ubiquitination is regulated by the hemerythrin-like region that acts as an oxygen and iron sensor. Undergoes constitutive ubiquitin-dependent degradation at the steady state by HERC2.

It is found in the cytoplasm. It localises to the perinuclear region. The protein localises to the nucleus. It functions in the pathway protein modification; protein ubiquitination. With respect to regulation, an iron-sulfur cluster promotes IRP2 polyubiquitination and degradation in response to both iron and oxygen concentrations. Component of some SCF (SKP1-cullin-F-box) protein ligase complex that plays a central role in iron homeostasis by promoting the ubiquitination and subsequent degradation of IREB2/IRP2. The C-terminal domain of FBXL5 contains a redox-sensitive [2Fe-2S] cluster that, upon oxidation, promotes binding to IRP2 to effect its oxygen-dependent degradation. Under iron deficiency conditions, the N-terminal hemerythrin-like (Hr) region, which contains a diiron metal center, cannot bind iron and undergoes conformational changes that destabilize the FBXL5 protein and cause its ubiquitination and degradation. When intracellular iron levels start rising, the Hr region is stabilized. Additional increases in iron levels facilitate the assembly and incorporation of a redox active [2Fe-2S] cluster in the C-terminal domain. Only when oxygen level is high enough to maintain the cluster in its oxidized state can FBXL5 recruit IRP2 as a substrate for polyubiquination and degradation. Promotes ubiquitination and subsequent degradation of the dynactin complex component DCTN1. Within the nucleus, promotes the ubiquitination of SNAI1; preventing its interaction with DNA and promoting its degradation. Negatively regulates DNA damage response by mediating the ubiquitin-proteasome degradation of the DNA repair protein NABP2. The sequence is that of F-box/LRR-repeat protein 5 (FBXL5) from Bos taurus (Bovine).